A 476-amino-acid polypeptide reads, in one-letter code: Arginine biosynthesis bifunctional protein ArgJ, mitochondrial (476 aa).

6 residues coordinate substrate: Thr193, Lys219, Thr237, Glu337, Asn471, and Ser476. Thr237 (nucleophile) is an active-site residue.

Belongs to the ArgJ family. As to quaternary structure, heterodimer of an alpha and a beta chain. The alpha and beta chains are autoproteolytically processed from a single precursor protein within the mitochondrion.

Its subcellular location is the mitochondrion matrix. The catalysed reaction is N(2)-acetyl-L-ornithine + L-glutamate = N-acetyl-L-glutamate + L-ornithine. The enzyme catalyses L-glutamate + acetyl-CoA = N-acetyl-L-glutamate + CoA + H(+). It functions in the pathway amino-acid biosynthesis; L-arginine biosynthesis; L-ornithine and N-acetyl-L-glutamate from L-glutamate and N(2)-acetyl-L-ornithine (cyclic): step 1/1. Its pathway is amino-acid biosynthesis; L-arginine biosynthesis; N(2)-acetyl-L-ornithine from L-glutamate: step 1/4. In terms of biological role, catalyzes two activities which are involved in the cyclic version of arginine biosynthesis: the synthesis of acetylglutamate from glutamate and acetyl-CoA, and of ornithine by transacetylation between acetylornithine and glutamate. This is Arginine biosynthesis bifunctional protein ArgJ, mitochondrial from Cryptococcus neoformans var. neoformans serotype D (strain JEC21 / ATCC MYA-565) (Filobasidiella neoformans).